A 206-amino-acid polypeptide reads, in one-letter code: Octanoyltransferase (206 aa).

The BPL/LPL catalytic domain occupies 30–206; the sequence is PETNDEIWLV…EFVTLLNNSI (177 aa). Substrate is bound by residues 69 to 76, 137 to 139, and 150 to 152; these read RGGQVTYH, SLG, and GIA. The active-site Acyl-thioester intermediate is the Cys168.

It belongs to the LipB family.

It localises to the cytoplasm. It carries out the reaction octanoyl-[ACP] + L-lysyl-[protein] = N(6)-octanoyl-L-lysyl-[protein] + holo-[ACP] + H(+). It functions in the pathway protein modification; protein lipoylation via endogenous pathway; protein N(6)-(lipoyl)lysine from octanoyl-[acyl-carrier-protein]: step 1/2. Functionally, catalyzes the transfer of endogenously produced octanoic acid from octanoyl-acyl-carrier-protein onto the lipoyl domains of lipoate-dependent enzymes. Lipoyl-ACP can also act as a substrate although octanoyl-ACP is likely to be the physiological substrate. This Francisella tularensis subsp. mediasiatica (strain FSC147) protein is Octanoyltransferase.